Consider the following 330-residue polypeptide: Ferredoxin--NADP reductase (330 aa).

FAD is bound by residues glutamate 35, glutamine 43, tyrosine 48, valine 90, phenylalanine 123, aspartate 285, and threonine 326.

The protein belongs to the ferredoxin--NADP reductase type 2 family. Homodimer. Requires FAD as cofactor.

The catalysed reaction is 2 reduced [2Fe-2S]-[ferredoxin] + NADP(+) + H(+) = 2 oxidized [2Fe-2S]-[ferredoxin] + NADPH. The protein is Ferredoxin--NADP reductase of Streptococcus pyogenes serotype M3 (strain ATCC BAA-595 / MGAS315).